The primary structure comprises 271 residues: Tryptophan synthase alpha chain (271 aa).

Active-site proton acceptor residues include Glu-49 and Asp-60.

The protein belongs to the TrpA family. In terms of assembly, tetramer of two alpha and two beta chains.

The catalysed reaction is (1S,2R)-1-C-(indol-3-yl)glycerol 3-phosphate + L-serine = D-glyceraldehyde 3-phosphate + L-tryptophan + H2O. Its pathway is amino-acid biosynthesis; L-tryptophan biosynthesis; L-tryptophan from chorismate: step 5/5. Functionally, the alpha subunit is responsible for the aldol cleavage of indoleglycerol phosphate to indole and glyceraldehyde 3-phosphate. In Buchnera aphidicola subsp. Schizaphis graminum (strain Sg), this protein is Tryptophan synthase alpha chain.